A 264-amino-acid chain; its full sequence is Methionine aminopeptidase (264 aa).

Histidine 79 contacts substrate. 3 residues coordinate a divalent metal cation: aspartate 97, aspartate 108, and histidine 171. Histidine 178 serves as a coordination point for substrate. Residues glutamate 204 and glutamate 235 each contribute to the a divalent metal cation site.

The protein belongs to the peptidase M24A family. Methionine aminopeptidase type 1 subfamily. As to quaternary structure, monomer. Co(2+) is required as a cofactor. It depends on Zn(2+) as a cofactor. Mn(2+) serves as cofactor. The cofactor is Fe(2+).

It carries out the reaction Release of N-terminal amino acids, preferentially methionine, from peptides and arylamides.. Removes the N-terminal methionine from nascent proteins. The N-terminal methionine is often cleaved when the second residue in the primary sequence is small and uncharged (Met-Ala-, Cys, Gly, Pro, Ser, Thr, or Val). Requires deformylation of the N(alpha)-formylated initiator methionine before it can be hydrolyzed. The polypeptide is Methionine aminopeptidase (Salmonella typhi).